A 179-amino-acid chain; its full sequence is MAKLHDYYKDEVVAKLMTEFNYNSVMQVPRVEKITLNMGVGEAIADKKLLDNAAADLTAISGQKPLITKARKSVAGFKIRQGYPIGCKVTLRGERMWEFFERLITIAVPRIRDFRGLSAKSFDGRGNYSMGVREQIIFPEIDYDKVDRVRGLDITITTTAKSDEEGRALLAAFDFPFRK.

This sequence belongs to the universal ribosomal protein uL5 family. As to quaternary structure, part of the 50S ribosomal subunit; part of the 5S rRNA/L5/L18/L25 subcomplex. Contacts the 5S rRNA and the P site tRNA. Forms a bridge to the 30S subunit in the 70S ribosome.

Its function is as follows. This is one of the proteins that bind and probably mediate the attachment of the 5S RNA into the large ribosomal subunit, where it forms part of the central protuberance. In the 70S ribosome it contacts protein S13 of the 30S subunit (bridge B1b), connecting the 2 subunits; this bridge is implicated in subunit movement. Contacts the P site tRNA; the 5S rRNA and some of its associated proteins might help stabilize positioning of ribosome-bound tRNAs. This is Large ribosomal subunit protein uL5 from Klebsiella pneumoniae (strain 342).